Reading from the N-terminus, the 513-residue chain is Bifunctional pantoate ligase/cytidylate kinase (513 aa).

Positions 1 to 282 (MGTFHRLTTT…VGQTRLIDNC (282 aa)) are pantoate--beta-alanine ligase. 32–39 (MGALHGGH) contacts ATP. Catalysis depends on His39, which acts as the Proton donor. Gln63 contacts (R)-pantoate. Residue Gln63 coordinates beta-alanine. 152–155 (GQKD) contacts ATP. Gln158 is a binding site for (R)-pantoate. ATP is bound by residues Val181 and 189-192 (LSSR). The interval 283–513 (LLDRRRPILA…HLYRSRFPQP (231 aa)) is cytidylate kinase.

This sequence in the N-terminal section; belongs to the pantothenate synthetase family. The protein in the C-terminal section; belongs to the cytidylate kinase family. Type 1 subfamily.

The protein localises to the cytoplasm. It catalyses the reaction (R)-pantoate + beta-alanine + ATP = (R)-pantothenate + AMP + diphosphate + H(+). The catalysed reaction is CMP + ATP = CDP + ADP. It carries out the reaction dCMP + ATP = dCDP + ADP. The protein operates within cofactor biosynthesis; (R)-pantothenate biosynthesis; (R)-pantothenate from (R)-pantoate and beta-alanine: step 1/1. In terms of biological role, catalyzes the condensation of pantoate with beta-alanine in an ATP-dependent reaction via a pantoyl-adenylate intermediate. Its function is as follows. Catalyzes the transfer of a phosphate group from ATP to either CMP or dCMP to form CDP or dCDP and ADP, respectively. This is Bifunctional pantoate ligase/cytidylate kinase from Thermosynechococcus vestitus (strain NIES-2133 / IAM M-273 / BP-1).